We begin with the raw amino-acid sequence, 157 residues long: Phosphopantetheine adenylyltransferase (157 aa).

Serine 8 is a substrate binding site. ATP contacts are provided by residues 8-9 (SF) and histidine 16. Substrate is bound by residues lysine 40, leucine 72, and arginine 86. Residues 87 to 89 (GLR), glutamate 97, and 121 to 127 (FGTISSS) each bind ATP.

Belongs to the bacterial CoaD family. Homohexamer. Mg(2+) is required as a cofactor.

The protein resides in the cytoplasm. The catalysed reaction is (R)-4'-phosphopantetheine + ATP + H(+) = 3'-dephospho-CoA + diphosphate. It functions in the pathway cofactor biosynthesis; coenzyme A biosynthesis; CoA from (R)-pantothenate: step 4/5. Its function is as follows. Reversibly transfers an adenylyl group from ATP to 4'-phosphopantetheine, yielding dephospho-CoA (dPCoA) and pyrophosphate. This Cutibacterium acnes (strain DSM 16379 / KPA171202) (Propionibacterium acnes) protein is Phosphopantetheine adenylyltransferase.